The following is an 805-amino-acid chain: Transducer protein BasT (805 aa).

Transmembrane regions (helical) follow at residues 25–45 (FNVLLLVVVIIVAAAGGYIHL) and 296–316 (NLAGLVVVALVGLLLVGLTVG). HAMP domains follow at residues 317 to 370 (RRTS…TAAS) and 437 to 490 (ERLE…ATLA). Positions 509–745 (SAAEIRSASD…EVVTMIDEVT (237 aa)) constitute a Methyl-accepting transducer domain. The interval 513-532 (IRSASDQVSESVQDISADAD) is disordered. Residues 516–526 (ASDQVSESVQD) show a composition bias toward polar residues. Glutamate methyl ester (Glu) occurs at positions 554, 736, and 763. Residues 752–779 (ATESQQVSAAAEEQAASVSEVAGRADDL) are disordered. A compositionally biased stretch (low complexity) spans 754–773 (ESQQVSAAAEEQAASVSEVA).

This sequence belongs to the methyl-accepting chemotaxis (MCP) protein family. In terms of assembly, interacts with CheA, CheY, CheW1 and CheW2. Post-translationally, methylated by CheR.

The protein localises to the cell membrane. Mediates chemotaxis towards five attractant amino acids (leucine, isoleucine, valine, methionine and cysteine). Probably transduces the signal from the substrate-binding protein BasB to the histidine kinase CheA. The chain is Transducer protein BasT (basT) from Halobacterium salinarum (strain ATCC 29341 / DSM 671 / R1).